The sequence spans 140 residues: Nucleoside diphosphate kinase (140 aa).

K11, F59, R87, T93, R104, and N114 together coordinate ATP. H117 serves as the catalytic Pros-phosphohistidine intermediate.

It belongs to the NDK family. In terms of assembly, homotetramer. Mg(2+) is required as a cofactor.

It is found in the cytoplasm. The enzyme catalyses a 2'-deoxyribonucleoside 5'-diphosphate + ATP = a 2'-deoxyribonucleoside 5'-triphosphate + ADP. It catalyses the reaction a ribonucleoside 5'-diphosphate + ATP = a ribonucleoside 5'-triphosphate + ADP. Its function is as follows. Major role in the synthesis of nucleoside triphosphates other than ATP. The ATP gamma phosphate is transferred to the NDP beta phosphate via a ping-pong mechanism, using a phosphorylated active-site intermediate. The sequence is that of Nucleoside diphosphate kinase from Brucella anthropi (strain ATCC 49188 / DSM 6882 / CCUG 24695 / JCM 21032 / LMG 3331 / NBRC 15819 / NCTC 12168 / Alc 37) (Ochrobactrum anthropi).